The chain runs to 601 residues: Dual specificity tyrosine-phosphorylation-regulated kinase 2 (601 aa).

A disordered region spans residues 1-24; sequence MLTRKPSAAAPAAYPTGRGGDSAV. S30 is subject to Phosphoserine. At T106 the chain carries Phosphothreonine; by ATM. The Nuclear localization signal signature appears at 189-191; the sequence is KKR. The Protein kinase domain occupies 222–535; the sequence is YEVLKVIGKG…PGQALRHPWL (314 aa). Residues 228–236, K251, and 301–304 each bind ATP; these read IGKGSFGQV and FELL. The Proton acceptor role is filled by D348. T381 bears the Phosphothreonine; by MAP3K10 mark. At Y382 the chain carries Phosphotyrosine; by autocatalysis. Residue S442 is modified to Phosphoserine; by ATM. S449 bears the Phosphoserine; by MAP3K10 mark.

This sequence belongs to the protein kinase superfamily. CMGC Ser/Thr protein kinase family. MNB/DYRK subfamily. In terms of assembly, component of an E3 ligase complex containing DYRK2, EDD/UBR5, DDB1 and DCAF1 (EDVP complex). Interacts directly with EDD/UBR5, DDB1 and DCAF1. Interacts with SIAH2 and MDM2. Interacts with MAP3K10 and NFATC1. May also interact with CCNL2. The cofactor is Mg(2+). Mn(2+) serves as cofactor. In terms of processing, autophosphorylates cotranslationally on the second tyrosine residue in the Tyr-X-Tyr motif in the activation loop, but once mature, does not have any protein tyrosine kinase activity. Phosphorylated at Thr-106 and Ser-442 by ATM in response to genotoxic stress. Under normal conditions, polyubiquitinated in the nucleus by MDM2, leading to its proteasomal degradation. Phosphorylation on Thr-106 and Ser-442 by ATM in response to genotoxic stress disrupts MDM2 binding and prevents MDM2-mediated ubiquitination and subsequent proteasomal degradation. Polyubiquitinated by SIAH2, leading to its proteasomal degradation. Polyubiquitinated by SIAH2 occurs under normal conditions, and is enhanced in response to hypoxia. Testis, after the onset of spermatogenesis.

It is found in the cytoplasm. It localises to the nucleus. The catalysed reaction is L-seryl-[protein] + ATP = O-phospho-L-seryl-[protein] + ADP + H(+). The enzyme catalyses L-threonyl-[protein] + ATP = O-phospho-L-threonyl-[protein] + ADP + H(+). It catalyses the reaction L-tyrosyl-[protein] + ATP = O-phospho-L-tyrosyl-[protein] + ADP + H(+). With respect to regulation, activated by autophosphorylation on the second tyrosine residue in the Tyr-X-Tyr motif in the activation loop. Inhibited by acridine analogs, purvalanol, and barely by harmine. Inhibited by leucettine and leucettine derivatives. Its function is as follows. Serine/threonine-protein kinase involved in the regulation of the mitotic cell cycle, cell proliferation, apoptosis, organization of the cytoskeleton and neurite outgrowth. Functions in part via its role in ubiquitin-dependent proteasomal protein degradation. Functions downstream of ATM and phosphorylates p53/TP53 at 'Ser-46', and thereby contributes to the induction of apoptosis in response to DNA damage. Phosphorylates NFATC1, and thereby inhibits its accumulation in the nucleus and its transcription factor activity. Phosphorylates EIF2B5 at 'Ser-544', enabling its subsequent phosphorylation and inhibition by GSK3B. Likewise, phosphorylation of NFATC1, CRMP2/DPYSL2 and CRMP4/DPYSL3 promotes their subsequent phosphorylation by GSK3B. May play a general role in the priming of GSK3 substrates. Inactivates GYS1 by phosphorylation at 'Ser-641', and potentially also a second phosphorylation site, thus regulating glycogen synthesis. Mediates EDVP E3 ligase complex formation and is required for the phosphorylation and subsequent degradation of KATNA1. Phosphorylates TERT at 'Ser-457', promoting TERT ubiquitination by the EDVP complex. Phosphorylates SIAH2, and thereby increases its ubiquitin ligase activity. Promotes the proteasomal degradation of MYC and JUN, and thereby regulates progress through the mitotic cell cycle and cell proliferation. Promotes proteasomal degradation of GLI2 and GLI3, and thereby plays a role in smoothened and sonic hedgehog signaling. Plays a role in cytoskeleton organization and neurite outgrowth via its phosphorylation of DCX and DPYSL2. Phosphorylates CRMP2/DPYSL2, CRMP4/DPYSL3, DCX, EIF2B5, EIF4EBP1, GLI2, GLI3, GYS1, JUN, MDM2, MYC, NFATC1, p53/TP53, TAU/MAPT and KATNA1. Can phosphorylate histone H1, histone H3 and histone H2B (in vitro). Can phosphorylate CARHSP1 (in vitro). The polypeptide is Dual specificity tyrosine-phosphorylation-regulated kinase 2 (DYRK2) (Homo sapiens (Human)).